Here is a 72-residue protein sequence, read N- to C-terminus: UPF0270 protein YheU (72 aa).

The protein belongs to the UPF0270 family.

In Salmonella choleraesuis (strain SC-B67), this protein is UPF0270 protein YheU.